The chain runs to 101 residues: Large ribosomal subunit protein eL36 (101 aa).

2 disordered regions span residues 1–31 and 75–101; these read MGEI…GFLS and GTHM…SKGE.

It belongs to the eukaryotic ribosomal protein eL36 family.

In Ulva compressa (Green alga), this protein is Large ribosomal subunit protein eL36 (RL36).